The chain runs to 192 residues: Adenylate kinase (192 aa).

Position 10–15 (G10–T15) interacts with ATP. The NMP stretch occupies residues S30–V59. AMP contacts are provided by residues T31, R36, Q57–V59, G85–R88, and Q92. Positions N126–D142 are LID. R127 is a binding site for ATP. The AMP site is built by R139 and R150. Residue A178 coordinates ATP.

The protein belongs to the adenylate kinase family. As to quaternary structure, monomer.

The protein resides in the cytoplasm. It carries out the reaction AMP + ATP = 2 ADP. It functions in the pathway purine metabolism; AMP biosynthesis via salvage pathway; AMP from ADP: step 1/1. Functionally, catalyzes the reversible transfer of the terminal phosphate group between ATP and AMP. Plays an important role in cellular energy homeostasis and in adenine nucleotide metabolism. The chain is Adenylate kinase from Sinorhizobium medicae (strain WSM419) (Ensifer medicae).